Here is a 66-residue protein sequence, read N- to C-terminus: Large ribosomal subunit protein bL31 (66 aa).

Positions 16, 18, 36, and 39 each coordinate Zn(2+).

The protein belongs to the bacterial ribosomal protein bL31 family. Type A subfamily. Part of the 50S ribosomal subunit. It depends on Zn(2+) as a cofactor.

Binds the 23S rRNA. The protein is Large ribosomal subunit protein bL31 of Sulfurovum sp. (strain NBC37-1).